A 121-amino-acid chain; its full sequence is Met-lysine-1b (121 aa).

An N-terminal signal peptide occupies residues 1-22 (MKSFVFALALIVAFACISESKS). Residues 23-69 (DHTGYEEEENLEDSELTDLVAAALLEELAEASEMDDLSYTEEAGGER) constitute a propeptide that is removed on maturation. At M120 the chain carries Methionine amide.

Expressed by the venom gland.

The protein resides in the secreted. Its function is as follows. Shows no antimicrobial activity against Gram-positive bacterium B.subtilis B-501 or Gram-negative bacterium E.coli DH5-alpha at concentrations up to 20 ug/ml. Shows no toxicity towards insect (S.carnaria) larvae. This chain is Met-lysine-1b, found in Lachesana tarabaevi (Spider).